Consider the following 753-residue polypeptide: MDPTHQPFRLYAEVIVNANINKILDYGIPAELENLVTVGSVVKVPLQRKLTNDKYKIAIVLKIKSSSDFVHVIQPILDISYEGITLPQDLIDLIFWISQYYFCPLGSAVSLFLPTVYAQTHSTKHQNNVFLGQNAERTQEILKTLDNPQQIAVLRKLLKTTKPLTPPELMRKTEVSAKTLDALVKQKFIRIVDSADLEIQDEQLHYFLPDPPTLNQEQLDAVNTISQSLVAEQFQTCLLFGVTGSGKTEVYLQVIRKARALGKSVILLVPEVALTIQTLSFFKMHFGSEVGVLHYKLSDSERTQTWYKASRGLINIIIGPRSAIFCPIQNLGLIIVDEEHDSAYKQSDLPPFYQARDVAVMRGKMTNATVILGSATPSLESYTNALSKKYTLSVLSKRASTSTPTKVFLIDMNLEMEKTRKKPFFSQTVIRSIEQRLEVGEQTIIFFNRRGFHTNVSCSSCKYTLKCPHCDMILTFHKTERILLCHLCNTRLSKPITSCPQCLGTMTLQYRGAGTEKIETLLREFFPTARTIRLDSDTTRFRGSHDALVKQFATGKADILIGTQMIAKGMHFPAVTLSVVLSGDSGLYIPDFRAAEQVFQLITQVTGRSGRSHLPGEVLIQTFLPQNSTISHALAQDFPAFYKEEILGRKVCNYPPFTRLIRCIFLGKCSDYTLKETQRVHTLIKQNLDSQASLMEISPCGHFKVKDLFHYQFLIKTRNILVANKQIQEALAAAKLSSKVRCIVDVDPVTTFF.

In terms of domain architecture, Helicase ATP-binding spans 228–395 (SLVAEQFQTC…LSKKYTLSVL (168 aa)). Residue 241-248 (GVTGSGKT) coordinates ATP. The DEAH box motif lies at 337–340 (DEEH). Cys-458, Cys-461, Cys-467, Cys-470, Cys-485, Cys-488, Cys-499, and Cys-502 together coordinate Zn(2+). In terms of domain architecture, Helicase C-terminal spans 491–646 (RLSKPITSCP…DFPAFYKEEI (156 aa)).

The protein belongs to the helicase family. PriA subfamily. Component of the replication restart primosome. Zn(2+) is required as a cofactor.

The enzyme catalyses Couples ATP hydrolysis with the unwinding of duplex DNA by translocating in the 3'-5' direction.. The catalysed reaction is ATP + H2O = ADP + phosphate + H(+). Initiates the restart of stalled replication forks, which reloads the replicative helicase on sites other than the origin of replication. Recognizes and binds to abandoned replication forks and remodels them to uncover a helicase loading site. Promotes assembly of the primosome at these replication forks. This chain is Replication restart protein PriA, found in Chlamydia trachomatis serovar D (strain ATCC VR-885 / DSM 19411 / UW-3/Cx).